Consider the following 309-residue polypeptide: L-2-keto-3-deoxyarabonate dehydratase (309 aa).

Lysine 171 functions as the Schiff-base intermediate with substrate in the catalytic mechanism.

The protein belongs to the DapA family. As to quaternary structure, homodimer.

It catalyses the reaction 2-dehydro-3-deoxy-L-arabinonate = 2,5-dioxopentanoate + H2O. Its function is as follows. Catalyzes the dehydration of L-2-keto-3-deoxyarabonate (L-KDA) to alpha-ketoglutaric semialdehyde (alphaKGSA). Is involved in a degradation pathway of L-arabinose that allows A.brasilense to grow on L-arabinose as a sole carbon source. The polypeptide is L-2-keto-3-deoxyarabonate dehydratase (araD) (Azospirillum brasilense).